A 295-amino-acid polypeptide reads, in one-letter code: Translational activator of cytochrome c oxidase 1 (295 aa).

Lys-162 is subject to N6-acetyllysine. A coiled-coil region spans residues 190–225; sequence VEDREKKAVNLERALELAIEAGAEDVREAEDEEEEK.

This sequence belongs to the TACO1 family.

The protein localises to the mitochondrion. Acts as a translational activator of mitochondrially-encoded cytochrome c oxidase 1. In Rattus norvegicus (Rat), this protein is Translational activator of cytochrome c oxidase 1.